The primary structure comprises 143 residues: MAIERTFSIIKPNAVAKNVIGSIFARFEAAGFRIVGTRMLHLTVEQARGFYAEHDGKPFFDGLVEFMTSGPIVVSVLESENAVQRHRDLLGATNPANALAGTLRADYADSFTENGTHGSDSLESAQREIAFFFGEGEVCPRTR.

ATP-binding residues include lysine 11, phenylalanine 59, arginine 87, threonine 93, arginine 104, and asparagine 114. Histidine 117 serves as the catalytic Pros-phosphohistidine intermediate.

This sequence belongs to the NDK family. As to quaternary structure, homotetramer. It depends on Mg(2+) as a cofactor.

It is found in the cytoplasm. It catalyses the reaction a 2'-deoxyribonucleoside 5'-diphosphate + ATP = a 2'-deoxyribonucleoside 5'-triphosphate + ADP. It carries out the reaction a ribonucleoside 5'-diphosphate + ATP = a ribonucleoside 5'-triphosphate + ADP. Major role in the synthesis of nucleoside triphosphates other than ATP. The ATP gamma phosphate is transferred to the NDP beta phosphate via a ping-pong mechanism, using a phosphorylated active-site intermediate. The sequence is that of Nucleoside diphosphate kinase from Salmonella arizonae (strain ATCC BAA-731 / CDC346-86 / RSK2980).